The chain runs to 429 residues: Bifunctional protein GlmU (429 aa).

The pyrophosphorylase stretch occupies residues 1–223; sequence MKTSILILAA…EDEFMGINDK (223 aa). UDP-N-acetyl-alpha-D-glucosamine is bound by residues 8–11, lysine 22, glutamine 74, and 81–82; these read LAAG and GT. Aspartate 102 lines the Mg(2+) pocket. Positions 135, 149, 164, and 221 each coordinate UDP-N-acetyl-alpha-D-glucosamine. A Mg(2+)-binding site is contributed by asparagine 221. The interval 224 to 244 is linker; the sequence is FELSIAENFMQEKIKKYWMQQ. The segment at 245–429 is N-acetyltransferase; sequence GVIFHLPQST…KNYYYKKFQK (185 aa). Positions 308 and 325 each coordinate UDP-N-acetyl-alpha-D-glucosamine. Histidine 336 serves as the catalytic Proton acceptor. 2 residues coordinate UDP-N-acetyl-alpha-D-glucosamine: tyrosine 339 and asparagine 350. Acetyl-CoA contacts are provided by residues 359 to 360, serine 378, alanine 396, and arginine 413; that span reads NY.

In the N-terminal section; belongs to the N-acetylglucosamine-1-phosphate uridyltransferase family. It in the C-terminal section; belongs to the transferase hexapeptide repeat family. As to quaternary structure, homotrimer. Requires Mg(2+) as cofactor.

It localises to the cytoplasm. The enzyme catalyses alpha-D-glucosamine 1-phosphate + acetyl-CoA = N-acetyl-alpha-D-glucosamine 1-phosphate + CoA + H(+). It catalyses the reaction N-acetyl-alpha-D-glucosamine 1-phosphate + UTP + H(+) = UDP-N-acetyl-alpha-D-glucosamine + diphosphate. It functions in the pathway nucleotide-sugar biosynthesis; UDP-N-acetyl-alpha-D-glucosamine biosynthesis; N-acetyl-alpha-D-glucosamine 1-phosphate from alpha-D-glucosamine 6-phosphate (route II): step 2/2. It participates in nucleotide-sugar biosynthesis; UDP-N-acetyl-alpha-D-glucosamine biosynthesis; UDP-N-acetyl-alpha-D-glucosamine from N-acetyl-alpha-D-glucosamine 1-phosphate: step 1/1. Its pathway is bacterial outer membrane biogenesis; LPS lipid A biosynthesis. Functionally, catalyzes the last two sequential reactions in the de novo biosynthetic pathway for UDP-N-acetylglucosamine (UDP-GlcNAc). The C-terminal domain catalyzes the transfer of acetyl group from acetyl coenzyme A to glucosamine-1-phosphate (GlcN-1-P) to produce N-acetylglucosamine-1-phosphate (GlcNAc-1-P), which is converted into UDP-GlcNAc by the transfer of uridine 5-monophosphate (from uridine 5-triphosphate), a reaction catalyzed by the N-terminal domain. The protein is Bifunctional protein GlmU of Campylobacter jejuni subsp. doylei (strain ATCC BAA-1458 / RM4099 / 269.97).